Reading from the N-terminus, the 437-residue chain is tRNA(Ile)-lysidine synthase (437 aa).

22 to 27 serves as a coordination point for ATP; sequence SGGLDS.

Belongs to the tRNA(Ile)-lysidine synthase family.

It localises to the cytoplasm. It catalyses the reaction cytidine(34) in tRNA(Ile2) + L-lysine + ATP = lysidine(34) in tRNA(Ile2) + AMP + diphosphate + H(+). Its function is as follows. Ligates lysine onto the cytidine present at position 34 of the AUA codon-specific tRNA(Ile) that contains the anticodon CAU, in an ATP-dependent manner. Cytidine is converted to lysidine, thus changing the amino acid specificity of the tRNA from methionine to isoleucine. This Xylella fastidiosa (strain Temecula1 / ATCC 700964) protein is tRNA(Ile)-lysidine synthase.